We begin with the raw amino-acid sequence, 172 residues long: Shikimate kinase (172 aa).

11–16 is an ATP binding site; the sequence is GSGKTT. Residue Thr15 participates in Mg(2+) binding. Substrate contacts are provided by Asp33, Arg57, and Gly79. ATP is bound at residue Arg117. Substrate is bound at residue Arg136.

This sequence belongs to the shikimate kinase family. Monomer. The cofactor is Mg(2+).

Its subcellular location is the cytoplasm. The enzyme catalyses shikimate + ATP = 3-phosphoshikimate + ADP + H(+). It participates in metabolic intermediate biosynthesis; chorismate biosynthesis; chorismate from D-erythrose 4-phosphate and phosphoenolpyruvate: step 5/7. Catalyzes the specific phosphorylation of the 3-hydroxyl group of shikimic acid using ATP as a cosubstrate. This chain is Shikimate kinase, found in Caldicellulosiruptor saccharolyticus (strain ATCC 43494 / DSM 8903 / Tp8T 6331).